A 745-amino-acid polypeptide reads, in one-letter code: Catalase-peroxidase (745 aa).

The segment at residues 97–223 (WHSAGTYRTG…LAAVQMGLIY (127 aa)) is a cross-link (tryptophyl-tyrosyl-methioninium (Trp-Tyr) (with M-249)). Histidine 98 serves as the catalytic Proton acceptor. Positions 223-249 (YVNPEGPDGSPDPWASARDIRMTFARM) form a cross-link, tryptophyl-tyrosyl-methioninium (Tyr-Met) (with W-97). Histidine 264 provides a ligand contact to heme b. Positions 345 to 368 (KQWQPVNPKPEDLAPGAHSPDRRV) are disordered.

Belongs to the peroxidase family. Peroxidase/catalase subfamily. As to quaternary structure, homodimer or homotetramer. Heme b serves as cofactor. Formation of the three residue Trp-Tyr-Met cross-link is important for the catalase, but not the peroxidase activity of the enzyme.

It catalyses the reaction H2O2 + AH2 = A + 2 H2O. It carries out the reaction 2 H2O2 = O2 + 2 H2O. Functionally, bifunctional enzyme with both catalase and broad-spectrum peroxidase activity. This is Catalase-peroxidase from Phenylobacterium zucineum (strain HLK1).